The chain runs to 131 residues: Large ribosomal subunit protein bL12c (131 aa).

A compositionally biased stretch (basic and acidic residues) spans 106–125 (KDNTNKENSEEIKQQLEEAG). The disordered stretch occupies residues 106–131 (KDNTNKENSEEIKQQLEEAGAKVSIK).

Belongs to the bacterial ribosomal protein bL12 family. As to quaternary structure, homodimer. Part of the ribosomal stalk of the 50S ribosomal subunit. Forms a multimeric L10(L12)X complex, where L10 forms an elongated spine to which 2 to 4 L12 dimers bind in a sequential fashion. Binds GTP-bound translation factors.

The protein localises to the plastid. The protein resides in the chloroplast. Its function is as follows. Forms part of the ribosomal stalk which helps the ribosome interact with GTP-bound translation factors. Is thus essential for accurate translation. This is Large ribosomal subunit protein bL12c from Gracilaria tenuistipitata var. liui (Red alga).